The sequence spans 439 residues: ATP-dependent RNA helicase RhlB (439 aa).

The short motif at 9-37 (QKFADLPLHPEVKQALAENGFEFCTPIQA) is the Q motif element. One can recognise a Helicase ATP-binding domain in the interval 40-219 (LPVLLQSKDI…YDHMNDPVKV (180 aa)). 53-60 (AQTGTGKT) is an ATP binding site. Positions 165-168 (DEAD) match the DEAD box motif. Residues 243-390 (KMRLLLTLIE…VSNYDSSALL (148 aa)) form the Helicase C-terminal domain. The tract at residues 398 to 439 (KIPRKHPAGTRNLRERAGAGRPQGAHRSGGRPPRHDRTRRHS) is disordered. Residues 425-439 (SGGRPPRHDRTRRHS) are compositionally biased toward basic residues.

It belongs to the DEAD box helicase family. RhlB subfamily. As to quaternary structure, component of the RNA degradosome, which is a multiprotein complex involved in RNA processing and mRNA degradation.

Its subcellular location is the cytoplasm. It catalyses the reaction ATP + H2O = ADP + phosphate + H(+). DEAD-box RNA helicase involved in RNA degradation. Has RNA-dependent ATPase activity and unwinds double-stranded RNA. The polypeptide is ATP-dependent RNA helicase RhlB (Shewanella putrefaciens (strain CN-32 / ATCC BAA-453)).